The following is a 187-amino-acid chain: UPF0301 protein ESA_00394 (187 aa).

Belongs to the UPF0301 (AlgH) family.

The sequence is that of UPF0301 protein ESA_00394 from Cronobacter sakazakii (strain ATCC BAA-894) (Enterobacter sakazakii).